The primary structure comprises 253 residues: Imidazole glycerol phosphate synthase subunit HisF (253 aa).

Catalysis depends on residues aspartate 11 and aspartate 130.

This sequence belongs to the HisA/HisF family. In terms of assembly, heterodimer of HisH and HisF.

The protein localises to the cytoplasm. It carries out the reaction 5-[(5-phospho-1-deoxy-D-ribulos-1-ylimino)methylamino]-1-(5-phospho-beta-D-ribosyl)imidazole-4-carboxamide + L-glutamine = D-erythro-1-(imidazol-4-yl)glycerol 3-phosphate + 5-amino-1-(5-phospho-beta-D-ribosyl)imidazole-4-carboxamide + L-glutamate + H(+). It functions in the pathway amino-acid biosynthesis; L-histidine biosynthesis; L-histidine from 5-phospho-alpha-D-ribose 1-diphosphate: step 5/9. Functionally, IGPS catalyzes the conversion of PRFAR and glutamine to IGP, AICAR and glutamate. The HisF subunit catalyzes the cyclization activity that produces IGP and AICAR from PRFAR using the ammonia provided by the HisH subunit. The chain is Imidazole glycerol phosphate synthase subunit HisF from Acetivibrio thermocellus (strain ATCC 27405 / DSM 1237 / JCM 9322 / NBRC 103400 / NCIMB 10682 / NRRL B-4536 / VPI 7372) (Clostridium thermocellum).